The following is a 471-amino-acid chain: ATP synthase subunit beta (471 aa).

Residue 153 to 160 coordinates ATP; that stretch reads GGAGVGKT.

The protein belongs to the ATPase alpha/beta chains family. As to quaternary structure, F-type ATPases have 2 components, CF(1) - the catalytic core - and CF(0) - the membrane proton channel. CF(1) has five subunits: alpha(3), beta(3), gamma(1), delta(1), epsilon(1). CF(0) has four main subunits: a(1), b(1), b'(1) and c(9-12).

It localises to the cell inner membrane. It catalyses the reaction ATP + H2O + 4 H(+)(in) = ADP + phosphate + 5 H(+)(out). In terms of biological role, produces ATP from ADP in the presence of a proton gradient across the membrane. The catalytic sites are hosted primarily by the beta subunits. This chain is ATP synthase subunit beta, found in Methylibium petroleiphilum (strain ATCC BAA-1232 / LMG 22953 / PM1).